Consider the following 267-residue polypeptide: Hydroxyethylthiazole kinase 2 (267 aa).

Met41 contacts substrate. Positions 116 and 166 each coordinate ATP. Gly193 is a binding site for substrate.

This sequence belongs to the Thz kinase family. The cofactor is Mg(2+).

It carries out the reaction 5-(2-hydroxyethyl)-4-methylthiazole + ATP = 4-methyl-5-(2-phosphooxyethyl)-thiazole + ADP + H(+). It participates in cofactor biosynthesis; thiamine diphosphate biosynthesis; 4-methyl-5-(2-phosphoethyl)-thiazole from 5-(2-hydroxyethyl)-4-methylthiazole: step 1/1. Functionally, catalyzes the phosphorylation of the hydroxyl group of 4-methyl-5-beta-hydroxyethylthiazole (THZ). The chain is Hydroxyethylthiazole kinase 2 from Streptococcus pneumoniae serotype 4 (strain ATCC BAA-334 / TIGR4).